The sequence spans 363 residues: Phosphoserine aminotransferase (363 aa).

Arg42 provides a ligand contact to L-glutamate. Pyridoxal 5'-phosphate contacts are provided by residues 76–77 (GR), Trp102, Thr156, Asp175, and Gln198. At Lys199 the chain carries N6-(pyridoxal phosphate)lysine. Position 240–241 (240–241 (NT)) interacts with pyridoxal 5'-phosphate.

Belongs to the class-V pyridoxal-phosphate-dependent aminotransferase family. SerC subfamily. Homodimer. Requires pyridoxal 5'-phosphate as cofactor.

It is found in the cytoplasm. It carries out the reaction O-phospho-L-serine + 2-oxoglutarate = 3-phosphooxypyruvate + L-glutamate. The enzyme catalyses 4-(phosphooxy)-L-threonine + 2-oxoglutarate = (R)-3-hydroxy-2-oxo-4-phosphooxybutanoate + L-glutamate. Its pathway is amino-acid biosynthesis; L-serine biosynthesis; L-serine from 3-phospho-D-glycerate: step 2/3. It participates in cofactor biosynthesis; pyridoxine 5'-phosphate biosynthesis; pyridoxine 5'-phosphate from D-erythrose 4-phosphate: step 3/5. Functionally, catalyzes the reversible conversion of 3-phosphohydroxypyruvate to phosphoserine and of 3-hydroxy-2-oxo-4-phosphonooxybutanoate to phosphohydroxythreonine. The protein is Phosphoserine aminotransferase of Shewanella baltica (strain OS185).